Here is a 251-residue protein sequence, read N- to C-terminus: uncharacterized protein (251 aa).

Val-14 to Val-37 is an NADP(+) binding site. Substrate is bound at residue Ser-145. Tyr-158 acts as the Proton acceptor in catalysis.

This sequence belongs to the short-chain dehydrogenases/reductases (SDR) family.

Its function is as follows. May be involved in the biosynthesis of a heptaene-type antibiotic. This is an uncharacterized protein from Streptomyces coelicolor.